Consider the following 205-residue polypeptide: Large ribosomal subunit protein uL3 (205 aa).

The tract at residues Gly-126–Gly-150 is disordered.

The protein belongs to the universal ribosomal protein uL3 family. Part of the 50S ribosomal subunit. Forms a cluster with proteins L14 and L19.

One of the primary rRNA binding proteins, it binds directly near the 3'-end of the 23S rRNA, where it nucleates assembly of the 50S subunit. The sequence is that of Large ribosomal subunit protein uL3 from Dehalococcoides mccartyi (strain ATCC BAA-2100 / JCM 16839 / KCTC 5957 / BAV1).